Here is a 397-residue protein sequence, read N- to C-terminus: Probable sugar efflux transporter (397 aa).

Helical transmembrane passes span 15 to 35 (VVTLAIAAFIFNTTEFVPVGL), 50 to 70 (VGIMLTIYAWVVALMSLPFML), 81 to 101 (LICLFVLFIASHVLSFLAWNF), 103 to 123 (VLVISRIGIAFAHAVFWSITA), 136 to 156 (AQALSLIATGTALAMVLGLPI), 169 to 189 (TFFAIGIGALITLVCLIKLLP), 209 to 229 (PALMSIYLLTVVVVTAHYTAY), 246 to 266 (FATVLLLILGGAGIIGSVVFG), 275 to 295 (PLISIAIMLLVICLMLLLPAA), 301 to 321 (LAVLSIFWGIAIMVIGLGMQV), 333 to 353 (VAMALFSGIFNIGIGAGALVG), and 364 to 384 (TIGYVGAVPALAALVWSIIIF).

The protein belongs to the major facilitator superfamily. SotB (TC 2.A.1.2) family.

The protein localises to the cell inner membrane. Involved in the efflux of sugars. The physiological role may be the reduction of the intracellular concentration of toxic sugars or sugar metabolites. This Citrobacter koseri (strain ATCC BAA-895 / CDC 4225-83 / SGSC4696) protein is Probable sugar efflux transporter.